The sequence spans 315 residues: Ester hydrolase C11orf54 (315 aa).

His-266, His-268, and His-278 together coordinate Zn(2+).

As to quaternary structure, monomer. Requires Zn(2+) as cofactor.

Its subcellular location is the nucleus. It localises to the cytoplasm. In terms of biological role, exhibits ester hydrolase activity on the substrate p-nitrophenyl acetate, in vitro. Regulates DNA damage and repair by regulating HIF1A degradation via chaperone-mediated autophagy (CMA). Its function is as follows. Probably non-functional. In Homo sapiens (Human), this protein is Ester hydrolase C11orf54 (C11orf54).